We begin with the raw amino-acid sequence, 616 residues long: KIF-binding protein (616 aa).

A disordered region spans residues 52–78 (EEEEESEAEGKEERRDGPESGGRRGES). The segment covering 59–78 (AEGKEERRDGPESGGRRGES) has biased composition (basic and acidic residues).

It belongs to the KIF-binding protein family.

It localises to the cytoplasm. It is found in the cytoskeleton. Its function is as follows. Activator of KIF1B plus-end-directed microtubule motor activity. Required for organization of axonal microtubules, and axonal outgrowth and maintenance during peripheral and central nervous system development. In Xenopus tropicalis (Western clawed frog), this protein is KIF-binding protein.